Here is a 116-residue protein sequence, read N- to C-terminus: Large ribosomal subunit protein bL17 (116 aa).

The protein belongs to the bacterial ribosomal protein bL17 family. Part of the 50S ribosomal subunit. Contacts protein L32.

The protein is Large ribosomal subunit protein bL17 of Acaryochloris marina (strain MBIC 11017).